Consider the following 244-residue polypeptide: Large ribosomal subunit protein uL30 (244 aa).

The protein belongs to the universal ribosomal protein uL30 family.

The polypeptide is Large ribosomal subunit protein uL30 (RPL7) (Candida glabrata (strain ATCC 2001 / BCRC 20586 / JCM 3761 / NBRC 0622 / NRRL Y-65 / CBS 138) (Yeast)).